Here is a 136-residue protein sequence, read N- to C-terminus: uncharacterized protein (136 aa).

Residues 1–33 (MRDHLPPGLPPDPFADDPCDPSAALEAVEPGQP) are disordered.

The protein to M.leprae ML0386.

This is an uncharacterized protein from Mycobacterium tuberculosis (strain CDC 1551 / Oshkosh).